The sequence spans 164 residues: Transcription elongation factor GreA (164 aa).

A coiled-coil region spans residues 15–76 (DRLKNELDQL…LQELLNSAKV (62 aa)).

Belongs to the GreA/GreB family.

Necessary for efficient RNA polymerase transcription elongation past template-encoded arresting sites. The arresting sites in DNA have the property of trapping a certain fraction of elongating RNA polymerases that pass through, resulting in locked ternary complexes. Cleavage of the nascent transcript by cleavage factors such as GreA or GreB allows the resumption of elongation from the new 3'terminus. GreA releases sequences of 2 to 3 nucleotides. The protein is Transcription elongation factor GreA of Rhodococcus erythropolis (strain PR4 / NBRC 100887).